Consider the following 322-residue polypeptide: MKVLWAALLVAFLAGCQGKMEPELEREPELEREPELHQQADWQSGQPWELALGRFWDYLRWVQTLSEQVQEELLSSQVTQELTALMDETMKELKAYKSELEEQLSPVAEETRARLSKELQAAQARLGADMEDVRSRLAXYRSEVQAMLGQSXDELRARLASHLRKLRKRLLRDVDDLQKRLAVYQAGAREGAERGVSAIRERLVPLVEQGRARAATVGSSLAGQPLQERAQAWGERLRARMEEVGSRTRDRLDEVKEQVEEVRAKLEEQAQQMRLQAEAFQARLKSWFEPLVEDMQRQWAGLVEKVQAAVGASAAPVPGDNH.

The first 18 residues, 1-18 (MKVLWAALLVAFLAGCQG), serve as a signal peptide directing secretion. Repeat copies occupy residues 84–105 (ALMD…EQLS), 106–127 (PVAE…ARLG), 128–149 (ADME…AMLG), 150–171 (QSXD…KRLL), 172–193 (RDVD…EGAE), 194–215 (RGVS…ARAA), 216–238 (TVGS…ERLR), and 239–260 (ARME…EQVE). Residues 84–260 (ALMDETMKEL…RLDEVKEQVE (177 aa)) form an 8 X 22 AA approximate tandem repeats region. Methionine 147 bears the Methionine sulfoxide mark. Serine 151 carries the phosphoserine modification. Residues 162-172 (HLRKLRKRLLR) form an LDL and other lipoprotein receptors binding region. Heparin is bound at residue 166–169 (LRKR). Positions 214–295 (AATVGSSLAG…SWFEPLVEDM (82 aa)) are lipid-binding and lipoprotein association. Threonine 216 is a glycosylation site (O-linked (GalNAc...) threonine). A heparin-binding site is contributed by 234 to 241 (GERLRARM). A homooligomerization region spans residues 271–322 (QQMRLQAEAFQARLKSWFEPLVEDMQRQWAGLVEKVQAAVGASAAPVPGDNH). The interval 283-295 (RLKSWFEPLVEDM) is specificity for association with VLDL.

Belongs to the apolipoprotein A1/A4/E family. As to quaternary structure, homotetramer. May interact with ABCA1; functionally associated with ABCA1 in the biogenesis of HDLs. May interact with APP/A4 amyloid-beta peptide; the interaction is extremely stable in vitro but its physiological significance is unclear. May interact with MAPT. May interact with MAP2. In the cerebrospinal fluid, interacts with secreted SORL1. Interacts with PMEL; this allows the loading of PMEL luminal fragment on ILVs to induce fibril nucleation. In terms of processing, APOE exists as multiple glycosylated and sialylated glycoforms within cells and in plasma. The extent of glycosylation and sialylation are tissue and context specific. Post-translationally, glycated in plasma VLDL. Phosphorylated by FAM20C in the extracellular medium.

Its subcellular location is the secreted. The protein localises to the extracellular space. The protein resides in the extracellular matrix. It is found in the extracellular vesicle. It localises to the endosome. Its subcellular location is the multivesicular body. Its function is as follows. APOE is an apolipoprotein, a protein associating with lipid particles, that mainly functions in lipoprotein-mediated lipid transport between organs via the plasma and interstitial fluids. APOE is a core component of plasma lipoproteins and is involved in their production, conversion and clearance. Apolipoproteins are amphipathic molecules that interact both with lipids of the lipoprotein particle core and the aqueous environment of the plasma. As such, APOE associates with chylomicrons, chylomicron remnants, very low density lipoproteins (VLDL) and intermediate density lipoproteins (IDL) but shows a preferential binding to high-density lipoproteins (HDL). It also binds a wide range of cellular receptors including the LDL receptor/LDLR, the LDL receptor-related proteins LRP1, LRP2 and LRP8 and the very low-density lipoprotein receptor/VLDLR that mediate the cellular uptake of the APOE-containing lipoprotein particles. Finally, APOE also has a heparin-binding activity and binds heparan-sulfate proteoglycans on the surface of cells, a property that supports the capture and the receptor-mediated uptake of APOE-containing lipoproteins by cells. A main function of APOE is to mediate lipoprotein clearance through the uptake of chylomicrons, VLDLs, and HDLs by hepatocytes. APOE is also involved in the biosynthesis by the liver of VLDLs as well as their uptake by peripheral tissues ensuring the delivery of triglycerides and energy storage in muscle, heart and adipose tissues. By participating in the lipoprotein-mediated distribution of lipids among tissues, APOE plays a critical role in plasma and tissues lipid homeostasis. APOE is also involved in two steps of reverse cholesterol transport, the HDLs-mediated transport of cholesterol from peripheral tissues to the liver, and thereby plays an important role in cholesterol homeostasis. First, it is functionally associated with ABCA1 in the biogenesis of HDLs in tissues. Second, it is enriched in circulating HDLs and mediates their uptake by hepatocytes. APOE also plays an important role in lipid transport in the central nervous system, regulating neuron survival and sprouting. The sequence is that of Apolipoprotein E (APOE) from Ateles geoffroyi (Black-handed spider monkey).